We begin with the raw amino-acid sequence, 167 residues long: Lipoprotein signal peptidase (167 aa).

Transmembrane regions (helical) follow at residues 8–28, 46–66, 70–90, and 101–121; these read TFLT…VVLL, WGHF…FGLF, KIPL…FLGI, and IALT…LFHG. Catalysis depends on residues Asp-125 and Asp-143. A helical transmembrane segment spans residues 139 to 159; sequence FNLADAFISLGTLLLVGHLYF.

Belongs to the peptidase A8 family.

It is found in the cell inner membrane. It catalyses the reaction Release of signal peptides from bacterial membrane prolipoproteins. Hydrolyzes -Xaa-Yaa-Zaa-|-(S,diacylglyceryl)Cys-, in which Xaa is hydrophobic (preferably Leu), and Yaa (Ala or Ser) and Zaa (Gly or Ala) have small, neutral side chains.. It functions in the pathway protein modification; lipoprotein biosynthesis (signal peptide cleavage). In terms of biological role, this protein specifically catalyzes the removal of signal peptides from prolipoproteins. This is Lipoprotein signal peptidase from Chlamydia muridarum (strain MoPn / Nigg).